Here is a 179-residue protein sequence, read N- to C-terminus: Large ribosomal subunit protein uL5 (179 aa).

The protein belongs to the universal ribosomal protein uL5 family. In terms of assembly, part of the 50S ribosomal subunit; part of the 5S rRNA/L5/L18/L25 subcomplex. Contacts the 5S rRNA and the P site tRNA. Forms a bridge to the 30S subunit in the 70S ribosome.

In terms of biological role, this is one of the proteins that bind and probably mediate the attachment of the 5S RNA into the large ribosomal subunit, where it forms part of the central protuberance. In the 70S ribosome it contacts protein S13 of the 30S subunit (bridge B1b), connecting the 2 subunits; this bridge is implicated in subunit movement. Contacts the P site tRNA; the 5S rRNA and some of its associated proteins might help stabilize positioning of ribosome-bound tRNAs. This Paraburkholderia phymatum (strain DSM 17167 / CIP 108236 / LMG 21445 / STM815) (Burkholderia phymatum) protein is Large ribosomal subunit protein uL5.